The following is a 209-amino-acid chain: Ras-related protein Rab-2-A (209 aa).

13 to 21 (GDTGVGKSC) contacts GTP. The Effector region motif lies at 35-43 (HDLTIGVEF). Residues 61–65 (DTAGQ), 119–122 (NKCD), and 149–151 (SAK) each bind GTP. 2 S-geranylgeranyl cysteine lipidation sites follow: Cys207 and Cys208.

The protein belongs to the small GTPase superfamily. Rab family.

It is found in the endoplasmic reticulum membrane. It localises to the golgi apparatus membrane. In terms of biological role, protein transport. Probably involved in vesicular traffic. In Zea mays (Maize), this protein is Ras-related protein Rab-2-A (RAB2A).